We begin with the raw amino-acid sequence, 210 residues long: Glutathione S-transferase 4 (210 aa).

Residues 1-80 form the GST N-terminal domain; that stretch reads MDFYYLPLSA…YLVEKYGKQD (80 aa). Glutathione is bound by residues S9, 50 to 52, and 64 to 66; these read HTI and ESR. A GST C-terminal domain is found at 87–208; the sequence is CPKKRALINQ…AGALEMKTLI (122 aa).

The protein belongs to the GST superfamily. Theta family. In terms of assembly, homodimer.

It carries out the reaction RX + glutathione = an S-substituted glutathione + a halide anion + H(+). Conjugation of reduced glutathione to a wide number of exogenous and endogenous hydrophobic electrophiles. The protein is Glutathione S-transferase 4 (Gst4) of Musca domestica (House fly).